Consider the following 610-residue polypeptide: MAAGRLPSARAVLAPLFLGLALLSVGPAPARALHNVTAELFGAEAWGTLAAFGDLNSDKQTDLFVLRERNDLIVFLADQSAPYFKPKVKVSLKTLSALVTSVVPGDYDGDSQMDVLLTYFPQNHTNSELGAVIFWGQNQTLDPKNMTILNRTFHDQPLIMDFNGDLIPDVFGITNESSQPQILLGGDLSWHPALTTKSKMRDPHSHAFIDLTEDFTADLFLTTLTASNAFQFEIWENLGGNFSIHSVFEKPKNLVVVGQSAFADFDGDGHMDHLLPGCEDKDCQKSAIYLMRSGTGQWVPVLQDFSNKGTLWGFVPFVHEEQPTTIPIPLTLHIGDYNMDGYPDALAILKNTSGSNQQAFLLENVPCNNASCEEVHRMFKVYWDLAGLNLIKDAIVATFFDIYEDGILDIIVLSKGYTKNDVAIHTLKNNFEADAYFVKVIVLSGLCSNDCPRKITPFGVNQPGPYIMYTTVDANGYLKNGSAGQLSQSAHLALQLPYNVLGLGRSANFLDHLFVGIPRPSGEKSIRKQEWTAIIPNSQLIVIPYPHNVPRSWSAKLYLTPSNIVLLTAVALIGVCIFILAIIAILHWQEKKADDREKRQEAHRFHFDAM.

Positions 1–32 (MAAGRLPSARAVLAPLFLGLALLSVGPAPARA) are cleaved as a signal peptide. 7 N-linked (GlcNAc...) asparagine glycosylation sites follow: asparagine 35, asparagine 123, asparagine 138, asparagine 145, asparagine 150, asparagine 175, and asparagine 241. An FG-GAP 1; atypical repeat occupies 98 to 135 (LVTSVVPGDYDGDSQMDVLLTYFPQNHTNSELGAVIFW). Residues 153-183 (FHDQPLIMDFNGDLIPDVFGITNESSQPQIL) form an FG-GAP 2; atypical repeat. Residues 256–291 (VVGQSAFADFDGDGHMDHLLPGCEDKDCQKSAIYLM) form an FG-GAP 3; atypical repeat. 3 N-linked (GlcNAc...) asparagine glycosylation sites follow: asparagine 351, asparagine 369, and asparagine 480. Residues 565-585 (VLLTAVALIGVCIFILAIIAI) form a helical membrane-spanning segment.

This sequence belongs to the TIP family. In terms of assembly, interacts with RUVBL1, RUVBL2 and alpha-tubulin.

It is found in the secreted. Its subcellular location is the membrane. Its function is as follows. Modulator of T-cell function. Has a protective effect in graft versus host disease model. The chain is T-cell immunomodulatory protein from Mus musculus (Mouse).